An 85-amino-acid chain; its full sequence is MTNPLRGEVIRLYKNLLYLGREYPKGTAYFRERLKTAFMKNKDVTDPEKIQKLIDRGDFVIKELEALYYLRKYRAMKKRYYEPEH.

This sequence belongs to the complex I LYR family.

This chain is LYR motif-containing protein 5A (lyrm5a), found in Danio rerio (Zebrafish).